Consider the following 935-residue polypeptide: Isoleucine--tRNA ligase (935 aa).

Residues 58–68 (PYANGSIHVGH) carry the 'HIGH' region motif. E558 is a binding site for L-isoleucyl-5'-AMP. Positions 599–603 (KMSKS) match the 'KMSKS' region motif. K602 serves as a coordination point for ATP. Residues C897, C900, C917, and C920 each coordinate Zn(2+).

This sequence belongs to the class-I aminoacyl-tRNA synthetase family. IleS type 1 subfamily. In terms of assembly, monomer. Requires Zn(2+) as cofactor.

Its subcellular location is the cytoplasm. The catalysed reaction is tRNA(Ile) + L-isoleucine + ATP = L-isoleucyl-tRNA(Ile) + AMP + diphosphate. In terms of biological role, catalyzes the attachment of isoleucine to tRNA(Ile). As IleRS can inadvertently accommodate and process structurally similar amino acids such as valine, to avoid such errors it has two additional distinct tRNA(Ile)-dependent editing activities. One activity is designated as 'pretransfer' editing and involves the hydrolysis of activated Val-AMP. The other activity is designated 'posttransfer' editing and involves deacylation of mischarged Val-tRNA(Ile). This chain is Isoleucine--tRNA ligase, found in Francisella philomiragia subsp. philomiragia (strain ATCC 25017 / CCUG 19701 / FSC 153 / O#319-036).